Consider the following 291-residue polypeptide: N-acetylmannosamine kinase (291 aa).

ATP-binding positions include 5–12 (AIDIGGTK) and 132–139 (GVGGGVVC). Zn(2+)-binding residues include H156, C166, C168, and C173.

The protein belongs to the ROK (NagC/XylR) family. NanK subfamily. Homodimer.

The catalysed reaction is an N-acyl-D-mannosamine + ATP = an N-acyl-D-mannosamine 6-phosphate + ADP + H(+). It functions in the pathway amino-sugar metabolism; N-acetylneuraminate degradation; D-fructose 6-phosphate from N-acetylneuraminate: step 2/5. In terms of biological role, catalyzes the phosphorylation of N-acetylmannosamine (ManNAc) to ManNAc-6-P. The protein is N-acetylmannosamine kinase of Salmonella dublin (strain CT_02021853).